The sequence spans 634 residues: Threonine--tRNA ligase (634 aa).

The TGS domain maps to 1–61 (MINITLPDGS…DHDASLRIIT (61 aa)). Positions 243 to 534 (DHRRIGKAQD…LIEHHAGAFP (292 aa)) are catalytic. Positions 334, 385, and 511 each coordinate Zn(2+).

Belongs to the class-II aminoacyl-tRNA synthetase family. Homodimer. Zn(2+) serves as cofactor.

The protein resides in the cytoplasm. It carries out the reaction tRNA(Thr) + L-threonine + ATP = L-threonyl-tRNA(Thr) + AMP + diphosphate + H(+). Functionally, catalyzes the attachment of threonine to tRNA(Thr) in a two-step reaction: L-threonine is first activated by ATP to form Thr-AMP and then transferred to the acceptor end of tRNA(Thr). Also edits incorrectly charged L-seryl-tRNA(Thr). The chain is Threonine--tRNA ligase from Xanthomonas oryzae pv. oryzae (strain MAFF 311018).